Reading from the N-terminus, the 137-residue chain is Phosphoinositide-interacting protein (137 aa).

The next 2 membrane-spanning stretches (helical) occupy residues Ile56–Ala76 and Pro94–Ile114.

Interacts with TRPV1.

It is found in the membrane. In terms of biological role, regulatory subunit of TRPV1, a molecular sensor of noxious heat and capsaicin. Positively regulates TRPV1 channel activity via phosphatidylinositol 4,5-bisphosphate (PIP2). Binds various phosphoinositide, including phosphatidylinositol 4,5-bisphosphate (PIP2), but not phosphatidylinositol (PI). The chain is Phosphoinositide-interacting protein (PIRT) from Homo sapiens (Human).